A 245-amino-acid chain; its full sequence is 6-carboxyhexanoate--CoA ligase (245 aa).

The protein belongs to the BioW family. In terms of assembly, homodimer. The cofactor is Mg(2+).

The catalysed reaction is heptanedioate + ATP + CoA = 6-carboxyhexanoyl-CoA + AMP + diphosphate. It functions in the pathway metabolic intermediate metabolism; pimeloyl-CoA biosynthesis; pimeloyl-CoA from pimelate: step 1/1. Its function is as follows. Catalyzes the transformation of pimelate into pimeloyl-CoA with concomitant hydrolysis of ATP to AMP. This is 6-carboxyhexanoate--CoA ligase from Thermodesulfovibrio yellowstonii (strain ATCC 51303 / DSM 11347 / YP87).